Here is a 170-residue protein sequence, read N- to C-terminus: Lipoprotein signal peptidase (170 aa).

Helical transmembrane passes span 12 to 32, 67 to 87, and 94 to 116; these read WYWV…WVLS, WQRW…SVWL, and MWRL…IDRL. Residues aspartate 123 and aspartate 141 contribute to the active site. A helical membrane pass occupies residues 133-153; the sequence is HFPAFNIADSAICVGAALIIL.

It belongs to the peptidase A8 family.

It localises to the cell inner membrane. The catalysed reaction is Release of signal peptides from bacterial membrane prolipoproteins. Hydrolyzes -Xaa-Yaa-Zaa-|-(S,diacylglyceryl)Cys-, in which Xaa is hydrophobic (preferably Leu), and Yaa (Ala or Ser) and Zaa (Gly or Ala) have small, neutral side chains.. The protein operates within protein modification; lipoprotein biosynthesis (signal peptide cleavage). This protein specifically catalyzes the removal of signal peptides from prolipoproteins. In Shewanella halifaxensis (strain HAW-EB4), this protein is Lipoprotein signal peptidase.